A 481-amino-acid chain; its full sequence is Proline--tRNA ligase (481 aa).

It belongs to the class-II aminoacyl-tRNA synthetase family. ProS type 3 subfamily. Homodimer.

The protein resides in the cytoplasm. It carries out the reaction tRNA(Pro) + L-proline + ATP = L-prolyl-tRNA(Pro) + AMP + diphosphate. Functionally, catalyzes the attachment of proline to tRNA(Pro) in a two-step reaction: proline is first activated by ATP to form Pro-AMP and then transferred to the acceptor end of tRNA(Pro). The sequence is that of Proline--tRNA ligase from Chlorobium limicola (strain DSM 245 / NBRC 103803 / 6330).